A 50-amino-acid polypeptide reads, in one-letter code: U23-theraphotoxin-Cg1a 2 (50 aa).

Cystine bridges form between Cys22/Cys36, Cys29/Cys41, and Cys35/Cys47.

This sequence belongs to the neurotoxin 10 (Hwtx-1) family. 64 (Jztx-20) subfamily. Expressed by the venom gland.

It is found in the secreted. Its function is as follows. Probable ion channel inhibitor. In Chilobrachys guangxiensis (Chinese earth tiger tarantula), this protein is U23-theraphotoxin-Cg1a 2.